A 98-amino-acid chain; its full sequence is Keratin, high sulfur matrix protein, IIIB4 (98 aa).

N-acetylalanine is present on Ala1.

This sequence belongs to the KRTAP type 3 family. As to quaternary structure, interacts with wool keratins. As to expression, wool.

In terms of biological role, in the wool cortex, wool keratin intermediate filaments are embedded in an interfilamentous matrix, consisting of hair keratin-associated proteins (KRTAP), which are essential for the formation of a rigid and resistant wool shaft through their extensive disulfide bond cross-linking with abundant cysteine residues of wool keratins. The matrix proteins include the high-sulfur and high-glycine-tyrosine keratins. This Ovis aries (Sheep) protein is Keratin, high sulfur matrix protein, IIIB4.